Consider the following 150-residue polypeptide: Large ribosomal subunit protein bL9 (150 aa).

Belongs to the bacterial ribosomal protein bL9 family.

Binds to the 23S rRNA. This Desulforudis audaxviator (strain MP104C) protein is Large ribosomal subunit protein bL9.